Here is a 282-residue protein sequence, read N- to C-terminus: MEMO1 family protein Msm_1438 (282 aa).

It belongs to the MEMO1 family.

This is MEMO1 family protein Msm_1438 from Methanobrevibacter smithii (strain ATCC 35061 / DSM 861 / OCM 144 / PS).